The following is a 412-amino-acid chain: Argininosuccinate synthase (412 aa).

Residues 20–28 and A48 contribute to the ATP site; that span reads AYSGGLDTS. Y100 and S105 together coordinate L-citrulline. G130 is a binding site for ATP. Residues T132, N136, and D137 each contribute to the L-aspartate site. N136 is an L-citrulline binding site. L-citrulline-binding residues include R140, S189, S198, E274, and Y286.

The protein belongs to the argininosuccinate synthase family. Type 1 subfamily. In terms of assembly, homotetramer.

It is found in the cytoplasm. It catalyses the reaction L-citrulline + L-aspartate + ATP = 2-(N(omega)-L-arginino)succinate + AMP + diphosphate + H(+). The protein operates within amino-acid biosynthesis; L-arginine biosynthesis; L-arginine from L-ornithine and carbamoyl phosphate: step 2/3. The polypeptide is Argininosuccinate synthase (Shewanella halifaxensis (strain HAW-EB4)).